Reading from the N-terminus, the 1031-residue chain is Beta-galactosidase (1031 aa).

Residues Asn98 and Asp197 each coordinate substrate. Asp197 contacts Na(+). Mg(2+) contacts are provided by Glu412, His414, and Glu457. Residues Glu457 and 533-536 each bind substrate; that span reads EYAH. Glu457 functions as the Proton donor in the catalytic mechanism. Glu533 serves as the catalytic Nucleophile. Mg(2+) is bound at residue Asn593. 2 residues coordinate Na(+): Phe597 and Asp600. Substrate is bound by residues Asp600 and Trp1005.

This sequence belongs to the glycosyl hydrolase 2 family. As to quaternary structure, homotetramer. Mg(2+) serves as cofactor. Na(+) is required as a cofactor.

It catalyses the reaction Hydrolysis of terminal non-reducing beta-D-galactose residues in beta-D-galactosides.. The polypeptide is Beta-galactosidase (Oenococcus oeni (strain ATCC BAA-331 / PSU-1)).